The sequence spans 314 residues: Malate dehydrogenase (314 aa).

NAD(+) is bound by residues 11 to 16 (GSGNIG) and D35. Substrate-binding residues include R84 and R90. NAD(+) is bound by residues N97 and 120–122 (ITN). N122 and R153 together coordinate substrate. H177 acts as the Proton acceptor in catalysis.

This sequence belongs to the LDH/MDH superfamily. MDH type 3 family.

It carries out the reaction (S)-malate + NAD(+) = oxaloacetate + NADH + H(+). Catalyzes the reversible oxidation of malate to oxaloacetate. This chain is Malate dehydrogenase, found in Rickettsia felis (strain ATCC VR-1525 / URRWXCal2) (Rickettsia azadi).